The primary structure comprises 20 residues: Large ribosomal subunit protein bL33 (20 aa).

The protein belongs to the bacterial ribosomal protein bL33 family.

This Brevundimonas vesicularis (Pseudomonas vesicularis) protein is Large ribosomal subunit protein bL33 (rpmG).